Reading from the N-terminus, the 132-residue chain is Small ribosomal subunit protein uS8 (132 aa).

The protein belongs to the universal ribosomal protein uS8 family. As to quaternary structure, part of the 30S ribosomal subunit. Contacts proteins S5 and S12.

Functionally, one of the primary rRNA binding proteins, it binds directly to 16S rRNA central domain where it helps coordinate assembly of the platform of the 30S subunit. This chain is Small ribosomal subunit protein uS8, found in Ehrlichia chaffeensis (strain ATCC CRL-10679 / Arkansas).